A 95-amino-acid polypeptide reads, in one-letter code: Co-chaperonin GroES (95 aa).

This sequence belongs to the GroES chaperonin family. As to quaternary structure, heptamer of 7 subunits arranged in a ring. Interacts with the chaperonin GroEL.

It is found in the cytoplasm. Together with the chaperonin GroEL, plays an essential role in assisting protein folding. The GroEL-GroES system forms a nano-cage that allows encapsulation of the non-native substrate proteins and provides a physical environment optimized to promote and accelerate protein folding. GroES binds to the apical surface of the GroEL ring, thereby capping the opening of the GroEL channel. This Methylocella silvestris (strain DSM 15510 / CIP 108128 / LMG 27833 / NCIMB 13906 / BL2) protein is Co-chaperonin GroES.